A 336-amino-acid polypeptide reads, in one-letter code: MLVLGVESTAHTFSIGVVKDGVVLGQLGKTYIPPGGGGIHPREAAEHHARVAPSILRQLLGQLGVGLSDIGAVAYAAGPGLGPALRVGAVLARALAIRLGVPVVPVHHGVAHIEVARYATGACDPLVVLISGGHTVVAGYSDGRYRVFGETLDVAIGNAIDMFAREVGLGFPGVPAVEKCAESAETVVPFPMPIVGQDLSYAGLATHALQLVKRGVPLPVVCRSLVETAYYMLAEVVERALAYTRKREVVVAGGVARSRRLKEILRAVGEEHGAVVKVVPDEYAGDNGAMIALTGYYAYRRGVYTTPEGSFVRQRWRLDSVDVPWFRDLCPVTTYI.

Fe cation contacts are provided by histidine 108 and histidine 112. Substrate is bound by residues leucine 129–glycine 133, aspartate 161, glutamate 178, and serine 258. Aspartate 286 is a binding site for Fe cation.

It belongs to the KAE1 / TsaD family. Requires Fe(2+) as cofactor.

Its subcellular location is the cytoplasm. It carries out the reaction L-threonylcarbamoyladenylate + adenosine(37) in tRNA = N(6)-L-threonylcarbamoyladenosine(37) in tRNA + AMP + H(+). In terms of biological role, required for the formation of a threonylcarbamoyl group on adenosine at position 37 (t(6)A37) in tRNAs that read codons beginning with adenine. Is probably involved in the transfer of the threonylcarbamoyl moiety of threonylcarbamoyl-AMP (TC-AMP) to the N6 group of A37. This chain is tRNA N6-adenosine threonylcarbamoyltransferase, found in Pyrobaculum neutrophilum (strain DSM 2338 / JCM 9278 / NBRC 100436 / V24Sta) (Thermoproteus neutrophilus).